Here is a 267-residue protein sequence, read N- to C-terminus: Methylglyoxal reductase DkgB (267 aa).

The Proton donor role is filled by Tyr39. His97 serves as a coordination point for substrate. An NADP(+)-binding site is contributed by 179 to 231 (MTLAYGKALKDEVIARIAVKHNATPVQVILAWAMGEGYSVIPSSTRRENLASN).

This sequence belongs to the aldo/keto reductase family. Monomer.

The protein resides in the cytoplasm. It carries out the reaction hydroxyacetone + NADP(+) = methylglyoxal + NADPH + H(+). Aldo-keto reductase that significantly contributes to cellular methylglyoxal detoxification by catalyzing the NADPH-dependent conversion of methylglyoxal to acetol. The chain is Methylglyoxal reductase DkgB from Salmonella typhi.